Reading from the N-terminus, the 32-residue chain is U5-ctenitoxin-Pn1a (32 aa).

3 disulfides stabilise this stretch: cysteine 3-cysteine 16, cysteine 9-cysteine 21, and cysteine 15-cysteine 30.

As to expression, expressed by the venom gland.

It is found in the secreted. Its function is as follows. Blocks voltage-gated sodium channels (Nav). Causes tail erection, scratching and a reduction in mobility at a dose level of 1.40 mg/mouse. This is U5-ctenitoxin-Pn1a from Phoneutria nigriventer (Brazilian armed spider).